Reading from the N-terminus, the 314-residue chain is MHAYLHCLSHSPLVGYVDPAQEVLDEVNGVIASARERIAAFSPELVVLFAPDHYNGFFYDVMPPFCLGVGATAIGDFGSAAGELPVPVELAEACAHAVMKSGIDLAVSYCMQVDHGFAQPLEFLLGGLDKVPVLPVFINGVATPLPGFQRTRMLGEAIGRFTSTLNKRVLFLGSGGLSHQPPVPELAKADAHMRDRLLGSGKDLPASERELRQQRVISAAEKFVEDQRTLHPLNPIWDNQFMTLLEQGRIQELDAVSNEELSAIAGKSTHEIKTWVAAFAAISTFGNWRSEGRYYRPIPEWIAGFGSLSARTEN.

The active-site Proton donor is the His-115. The active-site Proton acceptor is His-179.

Belongs to the LigB/MhpB extradiol dioxygenase family. Homotetramer. Fe(2+) is required as a cofactor.

The enzyme catalyses 3-(2,3-dihydroxyphenyl)propanoate + O2 = (2Z,4E)-2-hydroxy-6-oxonona-2,4-dienedioate + H(+). The catalysed reaction is (2E)-3-(2,3-dihydroxyphenyl)prop-2-enoate + O2 = (2Z,4E,7E)-2-hydroxy-6-oxonona-2,4,7-trienedioate + H(+). It functions in the pathway aromatic compound metabolism; 3-phenylpropanoate degradation. Catalyzes the non-heme iron(II)-dependent oxidative cleavage of 2,3-dihydroxyphenylpropionic acid and 2,3-dihydroxicinnamic acid into 2-hydroxy-6-ketononadienedioate and 2-hydroxy-6-ketononatrienedioate, respectively. This Escherichia coli O139:H28 (strain E24377A / ETEC) protein is 2,3-dihydroxyphenylpropionate/2,3-dihydroxicinnamic acid 1,2-dioxygenase.